Reading from the N-terminus, the 254-residue chain is 5'/3'-nucleotidase SurE (254 aa).

Residues D9, D10, S40, and N93 each coordinate a divalent metal cation.

The protein belongs to the SurE nucleotidase family. The cofactor is a divalent metal cation.

Its subcellular location is the cytoplasm. It catalyses the reaction a ribonucleoside 5'-phosphate + H2O = a ribonucleoside + phosphate. The catalysed reaction is a ribonucleoside 3'-phosphate + H2O = a ribonucleoside + phosphate. The enzyme catalyses [phosphate](n) + H2O = [phosphate](n-1) + phosphate + H(+). Functionally, nucleotidase with a broad substrate specificity as it can dephosphorylate various ribo- and deoxyribonucleoside 5'-monophosphates and ribonucleoside 3'-monophosphates with highest affinity to 3'-AMP. Also hydrolyzes polyphosphate (exopolyphosphatase activity) with the preference for short-chain-length substrates (P20-25). Might be involved in the regulation of dNTP and NTP pools, and in the turnover of 3'-mononucleotides produced by numerous intracellular RNases (T1, T2, and F) during the degradation of various RNAs. This chain is 5'/3'-nucleotidase SurE, found in Photorhabdus laumondii subsp. laumondii (strain DSM 15139 / CIP 105565 / TT01) (Photorhabdus luminescens subsp. laumondii).